A 647-amino-acid chain; its full sequence is DNA ligase (647 aa).

Residues 30–34 (DEEYD), 79–80 (SM), and E105 contribute to the NAD(+) site. Catalysis depends on K107, which acts as the N6-AMP-lysine intermediate. Residues R128, E162, and K301 each contribute to the NAD(+) site. Positions 395, 398, 411, and 416 each coordinate Zn(2+). Residues 570 to 647 (KSDGVIFGKT…ESAFNELVKE (78 aa)) enclose the BRCT domain.

It belongs to the NAD-dependent DNA ligase family. LigA subfamily. Requires Mg(2+) as cofactor. It depends on Mn(2+) as a cofactor.

It catalyses the reaction NAD(+) + (deoxyribonucleotide)n-3'-hydroxyl + 5'-phospho-(deoxyribonucleotide)m = (deoxyribonucleotide)n+m + AMP + beta-nicotinamide D-nucleotide.. Functionally, DNA ligase that catalyzes the formation of phosphodiester linkages between 5'-phosphoryl and 3'-hydroxyl groups in double-stranded DNA using NAD as a coenzyme and as the energy source for the reaction. It is essential for DNA replication and repair of damaged DNA. This Campylobacter jejuni subsp. jejuni serotype O:2 (strain ATCC 700819 / NCTC 11168) protein is DNA ligase.